Consider the following 488-residue polypeptide: MTFNNKTIEELHNLLVSKEISATELTQATLENIKSREEALNSFVTIAEEQALVQAKAIDEAGIDADNVLSGIPLAVKDNISTDGILTTAASKMLYNYEPIFDATAVANAKTKGMIVVGKTNMDEFAMGGSGETSHYGATKNAWDHSKVPGGSSSGSAAAVASGQVRLSLGSDTGGSIRQPAAFNGIVGLKPTYGTVSRFGLIAFGSSLDQIGPFAPTVKENALLLNAIASEDAKDSTSAPVRIADFTSKIGQDIKGMKIALPKEYLGEGIDPEVKETILNAAKHFEKLGAIVEEVSLPHSKYGVAVYYIIASSEASSNLQRFDGIRYGYRAEDATNLDEIYVNSRSQGFGEEVKRRIMLGTFSLSSGYYDAYYKKAGQVRTLIIQDFEKVFADYDLILGPTAPSVAYDLNSLNHDPVAMYLADLLTIPVNLAGLPGISIPAGFSQGLPVGLQLIGPKYSEETIYQAAAAFEATTDYHKQQPVIFGGDN.

Residues Lys-77 and Ser-152 each act as charge relay system in the active site. Residue Ser-176 is the Acyl-ester intermediate of the active site.

This sequence belongs to the amidase family. GatA subfamily. Heterotrimer of A, B and C subunits.

It catalyses the reaction L-glutamyl-tRNA(Gln) + L-glutamine + ATP + H2O = L-glutaminyl-tRNA(Gln) + L-glutamate + ADP + phosphate + H(+). Allows the formation of correctly charged Gln-tRNA(Gln) through the transamidation of misacylated Glu-tRNA(Gln) in organisms which lack glutaminyl-tRNA synthetase. The reaction takes place in the presence of glutamine and ATP through an activated gamma-phospho-Glu-tRNA(Gln). This is Glutamyl-tRNA(Gln) amidotransferase subunit A from Streptococcus pneumoniae (strain Hungary19A-6).